Here is a 712-residue protein sequence, read N- to C-terminus: Amino-acid acetyltransferase, mitochondrial (712 aa).

The N-terminal 47 residues, 1 to 47 (MFVRTCRSSCNAWTNATSTTQAGSLLPPNAHRSVVLTLSLQACSART), are a transit peptide targeting the mitochondrion. The interval 55–99 (FASTTSQSKRQEAEAEEKRQVSPRLGPSAPRSSYPSSAEARQKRD) is disordered. Positions 63–74 (KRQEAEAEEKRQ) are enriched in basic and acidic residues. Low complexity predominate over residues 81-93 (PSAPRSSYPSSAE). The N-acetyltransferase domain occupies 534-702 (GVPRLRLTDT…YEDVCRNIAP (169 aa)).

It belongs to the acetyltransferase family.

Its subcellular location is the mitochondrion. The enzyme catalyses L-glutamate + acetyl-CoA = N-acetyl-L-glutamate + CoA + H(+). It functions in the pathway amino-acid biosynthesis; L-arginine biosynthesis; N(2)-acetyl-L-ornithine from L-glutamate: step 1/4. Its activity is regulated as follows. Inhibited by arginine. N-acetylglutamate synthase involved in arginine biosynthesis. The chain is Amino-acid acetyltransferase, mitochondrial (arg-14) from Neurospora crassa (strain ATCC 24698 / 74-OR23-1A / CBS 708.71 / DSM 1257 / FGSC 987).